The chain runs to 427 residues: Trigger factor (427 aa).

Positions 163 to 248 (GDTVVIDFVG…VHEVKAKEVP (86 aa)) constitute a PPIase FKBP-type domain.

The protein belongs to the FKBP-type PPIase family. Tig subfamily.

The protein localises to the cytoplasm. It catalyses the reaction [protein]-peptidylproline (omega=180) = [protein]-peptidylproline (omega=0). Its function is as follows. Involved in protein export. Acts as a chaperone by maintaining the newly synthesized protein in an open conformation. Functions as a peptidyl-prolyl cis-trans isomerase. The sequence is that of Trigger factor from Streptococcus equi subsp. zooepidemicus (strain MGCS10565).